The chain runs to 1038 residues: MPPPPHIKPENVLKRAQELIAVGQAPAALNVLHEHVTSKRTRSSPIVSLEPVMLLFVELCVDLRKGKAAKDGLYQYKNIAQNTNVATIEVVLKKFIELAEKKVTEAQAKADEIQSSLESAAPSSNVEDLEAIETPETILLATVSGEQSRDRTDRAVVTPWLKFLWETYRTVLEILKNNARLEVMYQTTALQAFQFCLKYTRKTEFRRLCELLRNHVQNAAKYSAQMHAINLSDPDTLQRHLDTRFQQLNVAVELELWQEAFRSIEDIHTLLSLSKRPAKNVMMANYYEKLARIFLVSENYLFHAAAWSRYYNLLRQSAATLAAGQGTKKENPSVTDADMTKAVSFVLLSALAIPVISTSRSRGALVDVDEVRKNKNTRLTNLLGMAQSPTRAVLFKDALNKGLLKRARPEIRDLYNILEVDFHPLSICKKITPILKQIGADPEMEKYVVPLQQVILTRLFQQLSQVYESVSLKFVYELAQFPDPFQVTPAMIEKFIMNGCKKGDLAIRVDHISGVLTFDTDVFSSAKALHSGSAAGSAESEVGSVQRMQNTPAEIARLQLTRLAKTLHVSCMYVDPSYHEARLQAKQAAQTRAAAGAAKEHEETLARRVIIDKKKEAATDALQRKQREEETRKRIRTQQLQEAEKQRLLDEQREREKKRIKDEQDRIREQELKKQIEELKSGVKGIDLSEVDLKDLDANRLRAMKLAQLEKEKNELNDRIRTTGKRIDHLERAFRREELKHIPADYEAQKKRDMELYEALKAETLKEAEDKHKEAVALKHRLSRLVPVFNNFRKEVSEKRHEEFERRRKAAERDFEAKKKQRIKEVQDRRRRERAEREEAERRQKEEEERIKREEEERAAKEEERRRVLAEEKAKREEERKKLDEIALKQKQREEEAEARRASRKTGFPEPPARAEPERTAPRLNLAPRTGGGPSWRERQAAKEAAGGAAPEPAKEEPAAQPPRRTGGYVPPHLRGASAAAPAAPPSNGAAPSRYVPPSARDSGSSTPPSRTQTPATTSEEPKSAGKWVPRWKQQQGQ.

The stretch at 92–121 (LKKFIELAEKKVTEAQAKADEIQSSLESAA) forms a coiled coil. A PCI domain is found at 339–523 (MTKAVSFVLL…GVLTFDTDVF (185 aa)). The stretch at 611-899 (IDKKKEAATD…QKQREEEAEA (289 aa)) forms a coiled coil. 2 stretches are compositionally biased toward basic and acidic residues: residues 621-632 (ALQRKQREEETR) and 800-901 (RHEE…EARR). Disordered stretches follow at residues 621 to 641 (ALQRKQREEETRKRIRTQQLQ) and 800 to 1038 (RHEE…QQGQ). 2 stretches are compositionally biased toward low complexity: residues 943-952 (KEAAGGAAPE) and 976-993 (GASAAAPAAPPSNGAAPS). Positions 1002 to 1019 (DSGSSTPPSRTQTPATTS) are enriched in polar residues.

It belongs to the eIF-3 subunit A family. Component of the eukaryotic translation initiation factor 3 (eIF-3) complex.

The protein localises to the cytoplasm. Functionally, RNA-binding component of the eukaryotic translation initiation factor 3 (eIF-3) complex, which is involved in protein synthesis of a specialized repertoire of mRNAs and, together with other initiation factors, stimulates binding of mRNA and methionyl-tRNAi to the 40S ribosome. The eIF-3 complex specifically targets and initiates translation of a subset of mRNAs involved in cell proliferation. The protein is Eukaryotic translation initiation factor 3 subunit A (tif32) of Aspergillus oryzae (strain ATCC 42149 / RIB 40) (Yellow koji mold).